A 395-amino-acid polypeptide reads, in one-letter code: Protein pelota (395 aa).

A PGF motif motif is present at residues 210 to 212 (PGF). The segment at 371 to 395 (PELEDSDDDDDEDGAAGGVADSDSD) is disordered. Acidic residues predominate over residues 372–384 (ELEDSDDDDDEDG).

Belongs to the eukaryotic release factor 1 family. Pelota subfamily. Component of the Pelota-HBS1L complex, also named Dom34-Hbs1 complex, composed of pelo and HBS1. Interacts with Pink1 and Cnot4; the interaction with Cnot4 appears to be Pink1-dependent. A divalent metal cation serves as cofactor. As to expression, expressed in ovaries and muscles (at protein level). Expressed throughout all development stages.

It is found in the nucleus. Its subcellular location is the cytoplasm. Component of the Pelota-HBS1L complex, a complex that recognizes stalled ribosomes and triggers the No-Go Decay (NGD) pathway. In the Pelota-HBS1L complex, pelo recognizes ribosomes stalled at the 3' end of an mRNA and engages stalled ribosomes by destabilizing mRNA in the mRNA channel. Following ribosome-binding, the Pelota-HBS1L complex promotes recruitment of pix, which drives the disassembly of stalled ribosomes, followed by degradation of damaged mRNAs as part of the NGD pathway. Required prior to the first meiotic division for spindle formation and nuclear envelope breakdown during spermatogenesis. Together with HBS1, promotes spermatid individualization during spermatogenesis. Required for ovarian germ line stem cell self-renewal and oocyte development during oogenesis. Together with HSB1, required for transposon silencing in the ovary and testis. As part of the Pink1-regulated signaling, is recruited to damaged mitochondrial and is required for recruitment of autophagy receptors and induction of mitophagy. Required for normal eye patterning and for mitotic divisions in the ovary. The protein is Protein pelota (pelo) of Drosophila melanogaster (Fruit fly).